The primary structure comprises 143 residues: Nucleoside diphosphate kinase (143 aa).

6 residues coordinate ATP: lysine 11, phenylalanine 59, arginine 87, threonine 93, arginine 104, and asparagine 114. Histidine 117 acts as the Pros-phosphohistidine intermediate in catalysis.

This sequence belongs to the NDK family. As to quaternary structure, homotetramer. Requires Mg(2+) as cofactor.

The protein resides in the cytoplasm. The catalysed reaction is a 2'-deoxyribonucleoside 5'-diphosphate + ATP = a 2'-deoxyribonucleoside 5'-triphosphate + ADP. The enzyme catalyses a ribonucleoside 5'-diphosphate + ATP = a ribonucleoside 5'-triphosphate + ADP. Its function is as follows. Major role in the synthesis of nucleoside triphosphates other than ATP. The ATP gamma phosphate is transferred to the NDP beta phosphate via a ping-pong mechanism, using a phosphorylated active-site intermediate. This chain is Nucleoside diphosphate kinase, found in Clostridium perfringens (strain ATCC 13124 / DSM 756 / JCM 1290 / NCIMB 6125 / NCTC 8237 / Type A).